The sequence spans 62 residues: Large ribosomal subunit protein bL28 (62 aa).

This sequence belongs to the bacterial ribosomal protein bL28 family.

The sequence is that of Large ribosomal subunit protein bL28 from Streptococcus uberis (strain ATCC BAA-854 / 0140J).